The following is a 244-amino-acid chain: 14-3-3 protein homolog 1 (244 aa).

It belongs to the 14-3-3 family.

The sequence is that of 14-3-3 protein homolog 1 from Echinococcus multilocularis (Fox tapeworm).